Here is a 72-residue protein sequence, read N- to C-terminus: Translation initiation factor IF-1 (72 aa).

The region spanning 1–72 is the S1-like domain; sequence MAKEDSIEMQ…TKGRIIFRAR (72 aa).

This sequence belongs to the IF-1 family. As to quaternary structure, component of the 30S ribosomal translation pre-initiation complex which assembles on the 30S ribosome in the order IF-2 and IF-3, IF-1 and N-formylmethionyl-tRNA(fMet); mRNA recruitment can occur at any time during PIC assembly.

Its subcellular location is the cytoplasm. Functionally, one of the essential components for the initiation of protein synthesis. Stabilizes the binding of IF-2 and IF-3 on the 30S subunit to which N-formylmethionyl-tRNA(fMet) subsequently binds. Helps modulate mRNA selection, yielding the 30S pre-initiation complex (PIC). Upon addition of the 50S ribosomal subunit IF-1, IF-2 and IF-3 are released leaving the mature 70S translation initiation complex. The sequence is that of Translation initiation factor IF-1 from Actinobacillus succinogenes (strain ATCC 55618 / DSM 22257 / CCUG 43843 / 130Z).